We begin with the raw amino-acid sequence, 249 residues long: Metallo-beta-lactamase type 2 (249 aa).

The first 22 residues, 1 to 22, serve as a signal peptide directing secretion; it reads MLKRLKGLLVLALGFTGLQVFG. Zn(2+)-binding residues include His-98, His-100, Asp-102, His-161, and Cys-180. Lys-183 is a binding site for substrate. Residue His-222 participates in Zn(2+) binding.

This sequence belongs to the metallo-beta-lactamase superfamily. Class-B beta-lactamase family. As to quaternary structure, monomer. It depends on Zn(2+) as a cofactor.

The protein resides in the periplasm. The enzyme catalyses a beta-lactam + H2O = a substituted beta-amino acid. In terms of biological role, confers resistance to the different beta-lactams antibiotics (penicillin, cephalosporin and carbapenem) via the hydrolysis of the beta-lactam ring. The protein is Metallo-beta-lactamase type 2 (blaB5) of Elizabethkingia meningoseptica (Chryseobacterium meningosepticum).